The sequence spans 258 residues: Ribosomal RNA small subunit methyltransferase J (258 aa).

S-adenosyl-L-methionine contacts are provided by residues 123-124 (ER) and aspartate 177. A disordered region spans residues 232-258 (IDGPKPSHSLEGKSSRYDIYPKKALKA). The segment covering 239–252 (HSLEGKSSRYDIYP) has biased composition (basic and acidic residues).

Belongs to the methyltransferase superfamily. RsmJ family.

It is found in the cytoplasm. It catalyses the reaction guanosine(1516) in 16S rRNA + S-adenosyl-L-methionine = N(2)-methylguanosine(1516) in 16S rRNA + S-adenosyl-L-homocysteine + H(+). Functionally, specifically methylates the guanosine in position 1516 of 16S rRNA. This Pseudomonas putida (strain GB-1) protein is Ribosomal RNA small subunit methyltransferase J.